A 2778-amino-acid chain; its full sequence is Probable ubiquitin carboxyl-terminal hydrolase FAF (2778 aa).

The disordered stretch occupies residues 1-85 (MTFDTRRHTT…SQSSDDVAAS (85 aa)). Residues 10–39 (TGQPGSTAPSSSSSTTSTTTTTTSPAQSAG) show a composition bias toward low complexity. Residues 71 to 85 (QPATDSQSSDDVAAS) show a composition bias toward polar residues. At Ser924 the chain carries Phosphoserine. Residues 1065-1094 (GTGLASSPDSSSDSSTGSPPRPCPDMQRVE) form a disordered region. Low complexity predominate over residues 1070-1082 (SSPDSSSDSSTGS). Residues 1668–2062 (CGLKNAGATC…NAYMLFYTRC (395 aa)) enclose the USP domain. Cys1677 functions as the Nucleophile in the catalytic mechanism. His1986 (proton acceptor) is an active-site residue. Disordered regions lie at residues 2568-2632 (VSEK…GDSN) and 2644-2691 (AYTS…INGL). 2 stretches are compositionally biased toward low complexity: residues 2614-2627 (TPTT…AWPA) and 2644-2671 (AYTS…GSGA). Over residues 2672–2691 (NSETESSAQETTGETTINGL) the composition is skewed to polar residues.

It belongs to the peptidase C19 family. Interacts with imd. In terms of processing, ubiquitinated. Ubiquitination is enhanced by the expression of imd. As to expression, eye disks and ovaries. Expressed in larval fat body.

The enzyme catalyses Thiol-dependent hydrolysis of ester, thioester, amide, peptide and isopeptide bonds formed by the C-terminal Gly of ubiquitin (a 76-residue protein attached to proteins as an intracellular targeting signal).. In terms of biological role, ubiquitin C-terminal hydrolase involved in development and the imd/NF-kappa-B (IMD) signaling cascade. Required for eye and embryo development, and plays a role in compound eye assembly and oogenesis respectively. In the larval eye disks, cells outside the assembling facets require this protein for short-range cell interactions that prevent the mystery cells from becoming photoreceptors. Also required for nuclear migration and cellularization in early embryogenesis and could play a role in pole cell determination, development or function. Regulates the IMD signaling cascade at later stages of infection (around 6 hours post-infection) by inhibiting the expression of the antimicrobial peptides Dpt and Dro. Acts by modulating the state of imd polyubiquitination and/or stability; a function which appears to be independent of its enzymatic activity. In turn, imd enhances the polyubiquitination and stability of faf suggesting that they may form a regulatory feedback mechanism within the Imd pathway. The sequence is that of Probable ubiquitin carboxyl-terminal hydrolase FAF (faf) from Drosophila melanogaster (Fruit fly).